Consider the following 177-residue polypeptide: Probable chemoreceptor glutamine deamidase CheD (177 aa).

Belongs to the CheD family.

It carries out the reaction L-glutaminyl-[protein] + H2O = L-glutamyl-[protein] + NH4(+). Functionally, probably deamidates glutamine residues to glutamate on methyl-accepting chemotaxis receptors (MCPs), playing an important role in chemotaxis. This is Probable chemoreceptor glutamine deamidase CheD from Pseudomonas savastanoi pv. phaseolicola (strain 1448A / Race 6) (Pseudomonas syringae pv. phaseolicola (strain 1448A / Race 6)).